A 374-amino-acid polypeptide reads, in one-letter code: Phosphoserine aminotransferase (374 aa).

Arg-46 lines the L-glutamate pocket. Pyridoxal 5'-phosphate is bound by residues 80 to 81, Phe-104, Thr-150, Asp-174, and Gln-197; that span reads AT. Position 198 is an N6-(pyridoxal phosphate)lysine (Lys-198). 249–250 is a pyridoxal 5'-phosphate binding site; sequence NT.

This sequence belongs to the class-V pyridoxal-phosphate-dependent aminotransferase family. SerC subfamily. In terms of assembly, homodimer. Requires pyridoxal 5'-phosphate as cofactor.

The protein resides in the cytoplasm. The catalysed reaction is O-phospho-L-serine + 2-oxoglutarate = 3-phosphooxypyruvate + L-glutamate. It catalyses the reaction 4-(phosphooxy)-L-threonine + 2-oxoglutarate = (R)-3-hydroxy-2-oxo-4-phosphooxybutanoate + L-glutamate. The protein operates within amino-acid biosynthesis; L-serine biosynthesis; L-serine from 3-phospho-D-glycerate: step 2/3. Its pathway is cofactor biosynthesis; pyridoxine 5'-phosphate biosynthesis; pyridoxine 5'-phosphate from D-erythrose 4-phosphate: step 3/5. Its function is as follows. Catalyzes the reversible conversion of 3-phosphohydroxypyruvate to phosphoserine and of 3-hydroxy-2-oxo-4-phosphonooxybutanoate to phosphohydroxythreonine. This is Phosphoserine aminotransferase from Nocardioides sp. (strain ATCC BAA-499 / JS614).